The chain runs to 835 residues: U-box domain-containing protein 35 (835 aa).

Disordered regions lie at residues 1-22, 177-303, and 410-457; these read MSRSPDKLALPPPPPPPPSRTV, VRPS…SSNR, and EKEK…LEGT. Pro residues predominate over residues 10-19; sequence LPPPPPPPPS. A compositionally biased stretch (low complexity) spans 195 to 218; the sequence is RTNSSSGSSGPTSDSSDVMSSAHD. Positions 269-282 are enriched in polar residues; that stretch reads SSINRSSTDTTSRW. Basic and acidic residues-rich tracts occupy residues 285 to 295 and 410 to 455; these read RRRDYEERKEA and EKEK…EKLE. Residues 340–459 adopt a coiled-coil conformation; the sequence is QSYTDNQVNL…EKEKLEGTLG (120 aa). One can recognise a Protein kinase domain in the interval 480-745; it reads FSEELKIGMG…DLKDQILPAL (266 aa). ATP-binding positions include 486–494 and Lys507; that span reads IGMGAYGAV. The active-site Proton acceptor is the Asp602. Positions 765 to 835 constitute a U-box domain; the sequence is QPPTHFICPL…TAIMEWRSTR (71 aa).

This sequence belongs to the protein kinase superfamily. Ser/Thr protein kinase family.

It carries out the reaction L-seryl-[protein] + ATP = O-phospho-L-seryl-[protein] + ADP + H(+). The enzyme catalyses L-threonyl-[protein] + ATP = O-phospho-L-threonyl-[protein] + ADP + H(+). The catalysed reaction is S-ubiquitinyl-[E2 ubiquitin-conjugating enzyme]-L-cysteine + [acceptor protein]-L-lysine = [E2 ubiquitin-conjugating enzyme]-L-cysteine + N(6)-ubiquitinyl-[acceptor protein]-L-lysine.. Its pathway is protein modification; protein ubiquitination. In terms of biological role, functions as an E3 ubiquitin ligase. The polypeptide is U-box domain-containing protein 35 (PUB35) (Arabidopsis thaliana (Mouse-ear cress)).